The chain runs to 159 residues: Transcription elongation factor A protein-like 1 (159 aa).

Positions 1–97 (MDKPRKENEE…PPCGVGKHKL (97 aa)) are disordered. Residues 17–34 (KTDEERPPVEHSPEKQSP) are compositionally biased toward basic and acidic residues. Phosphoserine occurs at positions 28, 33, 38, 39, 43, and 44. The segment covering 37 to 54 (QSSEEQSSEEEFFPEELL) has biased composition (acidic residues). The segment covering 64-80 (SEERPPQEGLSRKDLFE) has biased composition (basic and acidic residues).

The protein belongs to the TFS-II family. TFA subfamily. In terms of processing, phosphorylation of Ser-38 and Ser-39 is critical for transcriptional repression. As to expression, expressed in all tissues examined. Highly expressed in heart, ovary, prostate and skeletal muscle. Moderately expressed in brain, placenta, testis and small intestine. Weakly expressed in lung, liver and spleen. Expressed in several cancer cell lines.

The protein localises to the nucleus. Its function is as follows. May be involved in transcriptional regulation. Modulates various viral and cellular promoters in a promoter context-dependent manner. For example, transcription from the FOS promoter is increased, while Rous sarcoma virus (RSV) long terminal repeat (LTR) promoter activity is repressed. Does not bind DNA directly. This chain is Transcription elongation factor A protein-like 1, found in Homo sapiens (Human).